The chain runs to 285 residues: NAD kinase (285 aa).

The active-site Proton acceptor is aspartate 66. Residues 66–67 (DG), 137–138 (ND), arginine 148, arginine 165, aspartate 167, and 178–183 (TAYSLS) contribute to the NAD(+) site.

Belongs to the NAD kinase family. A divalent metal cation is required as a cofactor.

It localises to the cytoplasm. It catalyses the reaction NAD(+) + ATP = ADP + NADP(+) + H(+). In terms of biological role, involved in the regulation of the intracellular balance of NAD and NADP, and is a key enzyme in the biosynthesis of NADP. Catalyzes specifically the phosphorylation on 2'-hydroxyl of the adenosine moiety of NAD to yield NADP. This is NAD kinase from Prosthecochloris aestuarii (strain DSM 271 / SK 413).